We begin with the raw amino-acid sequence, 328 residues long: 4-hydroxy-3-methylbut-2-enyl diphosphate reductase (328 aa).

A [4Fe-4S] cluster-binding site is contributed by Cys-13. (2E)-4-hydroxy-3-methylbut-2-enyl diphosphate-binding residues include His-41 and His-75. Positions 41 and 75 each coordinate dimethylallyl diphosphate. Isopentenyl diphosphate is bound by residues His-41 and His-75. Position 97 (Cys-97) interacts with [4Fe-4S] cluster. His-125 is a (2E)-4-hydroxy-3-methylbut-2-enyl diphosphate binding site. His-125 is a binding site for dimethylallyl diphosphate. His-125 contacts isopentenyl diphosphate. The active-site Proton donor is the Glu-127. (2E)-4-hydroxy-3-methylbut-2-enyl diphosphate is bound at residue Thr-168. Cys-229 provides a ligand contact to [4Fe-4S] cluster. Residues Ser-257, Ser-258, Asn-259, and Ser-306 each coordinate (2E)-4-hydroxy-3-methylbut-2-enyl diphosphate. Ser-257, Ser-258, Asn-259, and Ser-306 together coordinate dimethylallyl diphosphate. 4 residues coordinate isopentenyl diphosphate: Ser-257, Ser-258, Asn-259, and Ser-306.

This sequence belongs to the IspH family. Requires [4Fe-4S] cluster as cofactor.

It catalyses the reaction isopentenyl diphosphate + 2 oxidized [2Fe-2S]-[ferredoxin] + H2O = (2E)-4-hydroxy-3-methylbut-2-enyl diphosphate + 2 reduced [2Fe-2S]-[ferredoxin] + 2 H(+). The enzyme catalyses dimethylallyl diphosphate + 2 oxidized [2Fe-2S]-[ferredoxin] + H2O = (2E)-4-hydroxy-3-methylbut-2-enyl diphosphate + 2 reduced [2Fe-2S]-[ferredoxin] + 2 H(+). The protein operates within isoprenoid biosynthesis; dimethylallyl diphosphate biosynthesis; dimethylallyl diphosphate from (2E)-4-hydroxy-3-methylbutenyl diphosphate: step 1/1. Its pathway is isoprenoid biosynthesis; isopentenyl diphosphate biosynthesis via DXP pathway; isopentenyl diphosphate from 1-deoxy-D-xylulose 5-phosphate: step 6/6. In terms of biological role, catalyzes the conversion of 1-hydroxy-2-methyl-2-(E)-butenyl 4-diphosphate (HMBPP) into a mixture of isopentenyl diphosphate (IPP) and dimethylallyl diphosphate (DMAPP). Acts in the terminal step of the DOXP/MEP pathway for isoprenoid precursor biosynthesis. The polypeptide is 4-hydroxy-3-methylbut-2-enyl diphosphate reductase (Chlorobium phaeobacteroides (strain DSM 266 / SMG 266 / 2430)).